Reading from the N-terminus, the 232-residue chain is 5'-methylthioadenosine/S-adenosylhomocysteine nucleosidase (232 aa).

Glutamate 12 (proton acceptor) is an active-site residue. Substrate is bound by residues glycine 78, methionine 153, and 174–175 (ME). Catalysis depends on aspartate 198, which acts as the Proton donor.

The protein belongs to the PNP/UDP phosphorylase family. MtnN subfamily.

It catalyses the reaction S-adenosyl-L-homocysteine + H2O = S-(5-deoxy-D-ribos-5-yl)-L-homocysteine + adenine. The catalysed reaction is S-methyl-5'-thioadenosine + H2O = 5-(methylsulfanyl)-D-ribose + adenine. The enzyme catalyses 5'-deoxyadenosine + H2O = 5-deoxy-D-ribose + adenine. It functions in the pathway amino-acid biosynthesis; L-methionine biosynthesis via salvage pathway; S-methyl-5-thio-alpha-D-ribose 1-phosphate from S-methyl-5'-thioadenosine (hydrolase route): step 1/2. Catalyzes the irreversible cleavage of the glycosidic bond in both 5'-methylthioadenosine (MTA) and S-adenosylhomocysteine (SAH/AdoHcy) to adenine and the corresponding thioribose, 5'-methylthioribose and S-ribosylhomocysteine, respectively. Also cleaves 5'-deoxyadenosine, a toxic by-product of radical S-adenosylmethionine (SAM) enzymes, into 5-deoxyribose and adenine. This chain is 5'-methylthioadenosine/S-adenosylhomocysteine nucleosidase, found in Anoxybacillus flavithermus (strain DSM 21510 / WK1).